Here is a 330-residue protein sequence, read N- to C-terminus: Aspartate--ammonia ligase (330 aa).

Belongs to the class-II aminoacyl-tRNA synthetase family. AsnA subfamily.

It localises to the cytoplasm. It catalyses the reaction L-aspartate + NH4(+) + ATP = L-asparagine + AMP + diphosphate + H(+). It functions in the pathway amino-acid biosynthesis; L-asparagine biosynthesis; L-asparagine from L-aspartate (ammonia route): step 1/1. The protein is Aspartate--ammonia ligase of Yersinia pseudotuberculosis serotype O:1b (strain IP 31758).